Here is a 333-residue protein sequence, read N- to C-terminus: Protein FanF (333 aa).

Residues 1 to 22 (MKNKYNLLFFLFLLCYGDVALA) form the signal peptide.

Three disulfide bonds are present.

It is found in the fimbrium. Minor component of K99 fimbriae. Is not required for binding of K99 fimbriae to the ganglioside receptor. May play a role in initiation, elongation and flexibility of the fimbriae. This is Protein FanF (fanF) from Escherichia coli.